The following is a 146-amino-acid chain: Hemoglobin subunit beta (146 aa).

Ala-1 carries the post-translational modification N-acetylalanine. The Globin domain occupies 2–146 (SFDPHEKQLI…VAAALAAEYH (145 aa)). His-63 and His-92 together coordinate heme b.

The protein belongs to the globin family. In terms of assembly, heterotetramer of two alpha chains and two beta chains. In terms of tissue distribution, red blood cells.

Functionally, involved in oxygen transport from the lung to the various peripheral tissues. The chain is Hemoglobin subunit beta (HBB) from Crocodylus niloticus (Nile crocodile).